Consider the following 593-residue polypeptide: MTADSALYIPPYKADDQDIVVELNSRFGAETFTVQPTRTGMPVLWVPRERLIEVLTFLRQVPKPYVMLYDLHGVDERLRTHRRGLPSADFSVFYHLMSLERNSDVMIKVALSERDLNLPTATRIWPNANWYEREVWDMYGITFTGHPHLTRMLMPPTWQGHPLRKDYPARATEFDPYSLSAAKQDLEQEALRFKPEDWGMKRHGENEDYMFLNLGPNHPSAHGAFRIILQLDGEEIIDCVPEIGYHHRGAEKMAERQSWHSFIPYTDRIDYLGGVMNNLPYVLSVEKLAGIKVPQRVDVIRIMMAEFFRILNHLLYLGTYIQDVGAMTPVFFTFTDRQRAYKVVEAITGFRLHPAWYRIGGVAHDLPRGWDKLVREFLDWMPKRLDEYETAALKNSILRGRTIGVAQYNTKEALEWGTTGAGLRATGCDFDLRKARPYSGYENFEFEVPLAHNGDAYDRCMVKMGEMRQSLRIIEQCLKNMPEGPYKADHPLTTPPPKERTLQHIETLITHFLQVSWGPVMPANEAFQMIEATKGINSYYLTSDGSTMSYRTRIRTPSFAHLQQIPSVINGSMIADLIAYLGSIDFVMADVDR.

The interval 1 to 184 (MTADSALYIP…DPYSLSAAKQ (184 aa)) is NADH dehydrogenase I subunit C. An NADH dehydrogenase I subunit D region spans residues 208–593 (DYMFLNLGPN…IDFVMADVDR (386 aa)).

The protein in the N-terminal section; belongs to the complex I 30 kDa subunit family. It in the C-terminal section; belongs to the complex I 49 kDa subunit family. As to quaternary structure, NDH-1 is composed of 13 different subunits. Subunits NuoB, CD, E, F, and G constitute the peripheral sector of the complex.

It localises to the cell inner membrane. The enzyme catalyses a quinone + NADH + 5 H(+)(in) = a quinol + NAD(+) + 4 H(+)(out). In terms of biological role, NDH-1 shuttles electrons from NADH, via FMN and iron-sulfur (Fe-S) centers, to quinones in the respiratory chain. The immediate electron acceptor for the enzyme in this species is believed to be ubiquinone. Couples the redox reaction to proton translocation (for every two electrons transferred, four hydrogen ions are translocated across the cytoplasmic membrane), and thus conserves the redox energy in a proton gradient. The chain is NADH-quinone oxidoreductase subunit C/D from Pseudomonas aeruginosa (strain UCBPP-PA14).